The chain runs to 583 residues: NEDD4-binding protein 2-like 2 (583 aa).

Residues 162–197 adopt a coiled-coil conformation; sequence NSEKSEIDNELFQFYKEIEELEKEKDGFENSCKESE. The segment at 549-575 is disordered; it reads EPSHKSTQRPPPPQGRQRWGGSLGSHN.

This Homo sapiens (Human) protein is NEDD4-binding protein 2-like 2 (N4BP2L2).